The sequence spans 201 residues: FMN-dependent NADH:quinone oxidoreductase (201 aa).

FMN is bound by residues serine 10, 16–18 (SQS), 95–98 (MYNF), and 139–142 (TTGG).

It belongs to the azoreductase type 1 family. Homodimer. The cofactor is FMN.

The enzyme catalyses 2 a quinone + NADH + H(+) = 2 a 1,4-benzosemiquinone + NAD(+). It carries out the reaction N,N-dimethyl-1,4-phenylenediamine + anthranilate + 2 NAD(+) = 2-(4-dimethylaminophenyl)diazenylbenzoate + 2 NADH + 2 H(+). Functionally, quinone reductase that provides resistance to thiol-specific stress caused by electrophilic quinones. In terms of biological role, also exhibits azoreductase activity. Catalyzes the reductive cleavage of the azo bond in aromatic azo compounds to the corresponding amines. In Tolumonas auensis (strain DSM 9187 / NBRC 110442 / TA 4), this protein is FMN-dependent NADH:quinone oxidoreductase.